Here is a 269-residue protein sequence, read N- to C-terminus: Troponin T, fast skeletal muscle (269 aa).

Over residues 1–23 (MSDEEVEQVEEQYEEEEEAQEEA) the composition is skewed to acidic residues. Residues 1–72 (MSDEEVEQVE…EKVDFDDIQK (72 aa)) are disordered. S2 is subject to N-acetylserine. Phosphoserine is present on S2. The segment covering 24–34 (AEVHEEVHEPE) has biased composition (basic and acidic residues). A compositionally biased stretch (acidic residues) spans 35–47 (EVQEDTAEEDAEE). Positions 60–72 (PEGEKVDFDDIQK) are enriched in basic and acidic residues. S88 bears the Phosphoserine mark. Over residues 111-153 (RAERAEQQRIRAEKERERQNRLAEEKARREEEDAKRRAEDDLK) the composition is skewed to basic and acidic residues. Residues 111–158 (RAERAEQQRIRAEKERERQNRLAEEKARREEEDAKRRAEDDLKKKKAL) are disordered. 3 positions are modified to phosphoserine: S159, S166, and S167. Positions 245–269 (RIDQAQKHSKKAGTPAKGKVGGRWK) are disordered.

It belongs to the troponin T family. In terms of tissue distribution, in fetal and adult fast skeletal muscles, with a higher level expression in fetal than in adult muscle.

Troponin T is the tropomyosin-binding subunit of troponin, the thin filament regulatory complex which confers calcium-sensitivity to striated muscle actomyosin ATPase activity. The protein is Troponin T, fast skeletal muscle (TNNT3) of Homo sapiens (Human).